The sequence spans 199 residues: Potassium-transporting ATPase KdpC subunit (199 aa).

Residues 7 to 27 (PALVMTAALCLITGIIYPGLI) form a helical membrane-spanning segment.

It belongs to the KdpC family. In terms of assembly, the system is composed of three essential subunits: KdpA, KdpB and KdpC.

The protein resides in the cell inner membrane. Part of the high-affinity ATP-driven potassium transport (or Kdp) system, which catalyzes the hydrolysis of ATP coupled with the electrogenic transport of potassium into the cytoplasm. This subunit acts as a catalytic chaperone that increases the ATP-binding affinity of the ATP-hydrolyzing subunit KdpB by the formation of a transient KdpB/KdpC/ATP ternary complex. This Gemmatimonas aurantiaca (strain DSM 14586 / JCM 11422 / NBRC 100505 / T-27) protein is Potassium-transporting ATPase KdpC subunit.